A 952-amino-acid polypeptide reads, in one-letter code: Bifunctional ent-kaurene synthase (952 aa).

The DXDD B-type cyclization motif signature appears at 328–331 (DVDD). Mg(2+) is bound by residues Asp668, Glu672, Asn848, Asp849, Ser852, and Asp856. The DEXXE A-type cyclization motif motif lies at 668–672 (DEYME).

The protein belongs to the terpene synthase family. It depends on Mg(2+) as a cofactor.

The enzyme catalyses ent-copalyl diphosphate = ent-kaur-16-ene + diphosphate. The catalysed reaction is (2E,6E,10E)-geranylgeranyl diphosphate = ent-copalyl diphosphate. The protein operates within plant hormone biosynthesis; gibberellin biosynthesis. Bifunctional ent-kaurene synthase; part of the gene cluster that mediates the biosynthesis of gibberellins (GAs), diterpenoids that may provide a selective advantage during infection of the preferred host plant, rice. Gibberellins (GAs) are diterpenoids and are synthesized via the mevalonate pathway. Biosynthesis of the major metabolite GA3 (gibberellic acid) from geranylgeranyl diphosphate (GGPP) requires 13 steps. The GGPP produced by the geranylgeranyl diphosphate synthase GGS2 is converted to ent-kaurene via ent-copalyldiphosphate in a two-step cyclization reaction performed by the bifunctional ent-copalyl diphosphate synthase/ent-kaurene synthase enzyme (CPS/KS). Ent-Kaurene is metabolized to GAs by a series of oxidation reactions catalyzed by cytochrome P450 monooxygenases. Cytochrome P450 monooxygenase P450-4 is an ent-kaurene oxidase that catalyzes the three oxidation steps between ent-kaurene and ent-kaurenoic acid. The highly multifunctional cytochrome P450 monooxygenase P450-1 then catalyzes four steps involving oxidation at two carbon atoms, in the main pathway from ent-kaurenoic acid to GA14 via GA12-aldehyde as well as producing kaurenolides and fujenoic acids as by-products. The cytochrome P450 monooxygenase P450-2 then converts GA14 to GA4 by removal of C-20. GA4 is further converted to GA7 by the GA4 desaturase DES via 1,2-desaturation before cytochrome P450 monooxygenase P450-3, a 13-hydroxylase, hydroxylates GA7 to GA3, the final product of the GA-biosynthetic pathway. The sequence is that of Bifunctional ent-kaurene synthase from Gibberella fujikuroi (strain CBS 195.34 / IMI 58289 / NRRL A-6831) (Bakanae and foot rot disease fungus).